The chain runs to 227 residues: Cytochrome c oxidase subunit 2 (227 aa).

Over 1–14 the chain is Mitochondrial intermembrane; it reads MAYPFELGFQDATS. A helical transmembrane segment spans residues 15–45; sequence PIMEELLHFHDHTLMIVFLISSLVLYIISLM. Over 46–59 the chain is Mitochondrial matrix; sequence LTTKLTHTSTMDAQ. Residues 60–87 form a helical membrane-spanning segment; the sequence is EIETIWTILPAIILILIALPSLRILYMM. Residues 88–227 lie on the Mitochondrial intermembrane side of the membrane; sequence DEINDPSLTV…HFENWSSSML (140 aa). Cu cation is bound by residues H161, C196, E198, C200, H204, and M207. E198 is a Mg(2+) binding site.

The protein belongs to the cytochrome c oxidase subunit 2 family. Component of the cytochrome c oxidase (complex IV, CIV), a multisubunit enzyme composed of 14 subunits. The complex is composed of a catalytic core of 3 subunits MT-CO1, MT-CO2 and MT-CO3, encoded in the mitochondrial DNA, and 11 supernumerary subunits COX4I, COX5A, COX5B, COX6A, COX6B, COX6C, COX7A, COX7B, COX7C, COX8 and NDUFA4, which are encoded in the nuclear genome. The complex exists as a monomer or a dimer and forms supercomplexes (SCs) in the inner mitochondrial membrane with NADH-ubiquinone oxidoreductase (complex I, CI) and ubiquinol-cytochrome c oxidoreductase (cytochrome b-c1 complex, complex III, CIII), resulting in different assemblies (supercomplex SCI(1)III(2)IV(1) and megacomplex MCI(2)III(2)IV(2)). Found in a complex with TMEM177, COA6, COX18, COX20, SCO1 and SCO2. Interacts with TMEM177 in a COX20-dependent manner. Interacts with COX20. Interacts with COX16. Requires Cu cation as cofactor.

Its subcellular location is the mitochondrion inner membrane. The enzyme catalyses 4 Fe(II)-[cytochrome c] + O2 + 8 H(+)(in) = 4 Fe(III)-[cytochrome c] + 2 H2O + 4 H(+)(out). In terms of biological role, component of the cytochrome c oxidase, the last enzyme in the mitochondrial electron transport chain which drives oxidative phosphorylation. The respiratory chain contains 3 multisubunit complexes succinate dehydrogenase (complex II, CII), ubiquinol-cytochrome c oxidoreductase (cytochrome b-c1 complex, complex III, CIII) and cytochrome c oxidase (complex IV, CIV), that cooperate to transfer electrons derived from NADH and succinate to molecular oxygen, creating an electrochemical gradient over the inner membrane that drives transmembrane transport and the ATP synthase. Cytochrome c oxidase is the component of the respiratory chain that catalyzes the reduction of oxygen to water. Electrons originating from reduced cytochrome c in the intermembrane space (IMS) are transferred via the dinuclear copper A center (CU(A)) of subunit 2 and heme A of subunit 1 to the active site in subunit 1, a binuclear center (BNC) formed by heme A3 and copper B (CU(B)). The BNC reduces molecular oxygen to 2 water molecules using 4 electrons from cytochrome c in the IMS and 4 protons from the mitochondrial matrix. This is Cytochrome c oxidase subunit 2 (MT-CO2) from Tamias townsendii (Townsend's chipmunk).